A 99-amino-acid polypeptide reads, in one-letter code: Aspartyl/glutamyl-tRNA(Asn/Gln) amidotransferase subunit C (99 aa).

The protein belongs to the GatC family. In terms of assembly, heterotrimer of A, B and C subunits.

It catalyses the reaction L-glutamyl-tRNA(Gln) + L-glutamine + ATP + H2O = L-glutaminyl-tRNA(Gln) + L-glutamate + ADP + phosphate + H(+). It carries out the reaction L-aspartyl-tRNA(Asn) + L-glutamine + ATP + H2O = L-asparaginyl-tRNA(Asn) + L-glutamate + ADP + phosphate + 2 H(+). Its function is as follows. Allows the formation of correctly charged Asn-tRNA(Asn) or Gln-tRNA(Gln) through the transamidation of misacylated Asp-tRNA(Asn) or Glu-tRNA(Gln) in organisms which lack either or both of asparaginyl-tRNA or glutaminyl-tRNA synthetases. The reaction takes place in the presence of glutamine and ATP through an activated phospho-Asp-tRNA(Asn) or phospho-Glu-tRNA(Gln). This Polaromonas naphthalenivorans (strain CJ2) protein is Aspartyl/glutamyl-tRNA(Asn/Gln) amidotransferase subunit C.